The primary structure comprises 462 residues: Bindin (462 aa).

The signal sequence occupies residues 1–19; it reads MARQLSVILVALTLTTALA. The propeptide occupies 20–244; sequence ENFPTRTSAP…DSGRSARKKR (225 aa). 2 disordered regions span residues 155 to 194 and 221 to 278; these read DDRR…APKD and RTRR…QGMG. The fucose-binding domain stretch occupies residues 372–380; that stretch reads LRHLRHHSN.

Belongs to the bindin family.

It is found in the cytoplasmic vesicle. The protein resides in the secretory vesicle. Its subcellular location is the acrosome lumen. In terms of biological role, species-specific sea urchin sperm protein required for adhesion of sperm to the egg surface during fertilization. Bindin coats the acrosomal process after it is externalized by the acrosome reaction. It binds to sulfated, fucose-containing polysaccharides on the vitelline layer receptor proteoglycans which cover the egg plasma membrane. The chain is Bindin from Lytechinus variegatus (Green sea urchin).